A 461-amino-acid polypeptide reads, in one-letter code: tRNA modification GTPase MnmE (461 aa).

(6S)-5-formyl-5,6,7,8-tetrahydrofolate is bound by residues R27, E89, and R128. Residues 224–382 (GLATAIVGQP…LEELINKLFF (159 aa)) form the TrmE-type G domain. N234 is a binding site for K(+). GTP-binding positions include 234 to 239 (NVGKSS), 253 to 259 (TDVAGTT), and 278 to 281 (DTAG). S238 lines the Mg(2+) pocket. K(+) contacts are provided by T253, V255, and T258. T259 contributes to the Mg(2+) binding site. (6S)-5-formyl-5,6,7,8-tetrahydrofolate is bound at residue K461.

It belongs to the TRAFAC class TrmE-Era-EngA-EngB-Septin-like GTPase superfamily. TrmE GTPase family. As to quaternary structure, homodimer. Heterotetramer of two MnmE and two MnmG subunits. The cofactor is K(+).

The protein localises to the cytoplasm. Its function is as follows. Exhibits a very high intrinsic GTPase hydrolysis rate. Involved in the addition of a carboxymethylaminomethyl (cmnm) group at the wobble position (U34) of certain tRNAs, forming tRNA-cmnm(5)s(2)U34. This Lactobacillus acidophilus (strain ATCC 700396 / NCK56 / N2 / NCFM) protein is tRNA modification GTPase MnmE.